The primary structure comprises 856 residues: Envelope glycoprotein gp160 (856 aa).

A signal peptide spans 1-31 (MKVKGIQGNWQNWWKWGTLILGLVIICSAAE). At 32-684 (NLWVTVYYGV…ISNWLWYIKI (653 aa)) the chain is on the extracellular side. Cysteines 53 and 73 form a disulfide. N-linked (GlcNAc...) asparagine; by host glycans are attached at residues Asn87, Asn132, Asn138, Asn152, Asn156, Asn183, and Asn198. Cystine bridges form between Cys118–Cys206, Cys125–Cys197, Cys130–Cys153, Cys219–Cys248, and Cys229–Cys240. The interval 130–152 (CHNITIKDNNTNVDTEMKEEIKN) is V1. Positions 153–197 (CSYNMTTELRDKQRKIYSLFYRLDIVPIGGNSSNGDSSKYRLINC) are V2. N-linked (GlcNAc...) asparagine; by host glycosylation is found at Asn242, Asn263, Asn277, Asn294, Asn302, Asn332, Asn339, Asn355, and Asn364. Residues 297-330 (CMRPNNNTRKSISIGPGRAFFATGDIIGDIRQAH) form a V3 region. A disulfide bridge connects residues Cys297 and Cys331. Residues 365 to 375 (SSGGDVEITTH) are CD4-binding loop. Disulfide bonds link Cys379/Cys445 and Cys386/Cys418. The segment at 386–418 (CNTSGLFNGTWLNGTSNNTWKIDTVNDTIILPC) is V4. N-linked (GlcNAc...) asparagine; by host glycans are attached at residues Asn387, Asn393, Asn398, Asn402, Asn411, Asn448, Asn461, Asn462, and Asn465. 2 V5 regions span residues 461–471 (NNTSNETFRPG) and 463–471 (TSNETFRPG). Residues 512–532 (AIGMGAFFLGFLGAAGSTMGA) form a fusion peptide region. An immunosuppression region spans residues 574 to 592 (KQLQARILAVERYLKDQQL). Cys598 and Cys604 are oxidised to a cystine. 3 N-linked (GlcNAc...) asparagine; by host glycosylation sites follow: Asn611, Asn616, and Asn637. Residues 633–667 (KEVSNYTQVIYNLIEESQTQQEINERDLLALDKWA) adopt a coiled-coil conformation. The interval 662-683 (ALDKWANLWNWFDISNWLWYIK) is MPER; binding to GalCer. Residues 685–705 (FIMIVGGLIGLRIVFAVLSII) traverse the membrane as a helical segment. Residues 706–856 (NRVRQGYSPL…IRQGLERALL (151 aa)) lie on the Cytoplasmic side of the membrane. Residues 712 to 715 (YSPL) carry the YXXL motif; contains endocytosis signal motif. Residues 720–742 (LTHHQREPDRPERIEEGGGEQDR) form a disordered region. Residues 723 to 742 (HQREPDRPERIEEGGGEQDR) are compositionally biased toward basic and acidic residues. Cys764 is lipidated: S-palmitoyl cysteine; by host. The short motif at 855-856 (LL) is the Di-leucine internalization motif element.

The protein belongs to the HIV-1 env protein family. As to quaternary structure, the mature envelope protein (Env) consists of a homotrimer of non-covalently associated gp120-gp41 heterodimers. The resulting complex protrudes from the virus surface as a spike. There seems to be as few as 10 spikes on the average virion. Interacts with host CD4, CCR5 and CXCR4. Gp120 also interacts with the C-type lectins CD209/DC-SIGN and CLEC4M/DC-SIGNR (collectively referred to as DC-SIGN(R)). Gp120 and gp41 interact with GalCer. Gp120 interacts with host ITGA4/ITGB7 complex; on CD4+ T-cells, this interaction results in rapid activation of integrin ITGAL/LFA-1, which facilitates efficient cell-to-cell spreading of HIV-1. Gp120 interacts with cell-associated heparan sulfate; this interaction increases virus infectivity on permissive cells and may be involved in infection of CD4- cells. The mature envelope protein (Env) consists of a homotrimer of non-covalently associated gp120-gp41 heterodimers. The resulting complex protrudes from the virus surface as a spike. There seems to be as few as 10 spikes on the average virion. Highly glycosylated by host. The high number of glycan on the protein is reffered to as 'glycan shield' because it contributes to hide protein sequence from adaptive immune system. In terms of processing, palmitoylation of the transmembrane protein and of Env polyprotein (prior to its proteolytic cleavage) is essential for their association with host cell membrane lipid rafts. Palmitoylation is therefore required for envelope trafficking to classical lipid rafts, but not for viral replication. Post-translationally, specific enzymatic cleavages in vivo yield mature proteins. Envelope glycoproteins are synthesized as an inactive precursor that is heavily N-glycosylated and processed likely by host cell furin in the Golgi to yield the mature SU and TM proteins. The cleavage site between SU and TM requires the minimal sequence [KR]-X-[KR]-R. About 2 of the 9 disulfide bonds of gp41 are reduced by P4HB/PDI, following binding to CD4 receptor.

The protein resides in the virion membrane. It localises to the host cell membrane. It is found in the host endosome membrane. Functionally, oligomerizes in the host endoplasmic reticulum into predominantly trimers. In a second time, gp160 transits in the host Golgi, where glycosylation is completed. The precursor is then proteolytically cleaved in the trans-Golgi and thereby activated by cellular furin or furin-like proteases to produce gp120 and gp41. Attaches the virus to the host lymphoid cell by binding to the primary receptor CD4. This interaction induces a structural rearrangement creating a high affinity binding site for a chemokine coreceptor like CXCR4 and/or CCR5. Acts as a ligand for CD209/DC-SIGN and CLEC4M/DC-SIGNR, which are respectively found on dendritic cells (DCs), and on endothelial cells of liver sinusoids and lymph node sinuses. These interactions allow capture of viral particles at mucosal surfaces by these cells and subsequent transmission to permissive cells. HIV subverts the migration properties of dendritic cells to gain access to CD4+ T-cells in lymph nodes. Virus transmission to permissive T-cells occurs either in trans (without DCs infection, through viral capture and transmission), or in cis (following DCs productive infection, through the usual CD4-gp120 interaction), thereby inducing a robust infection. In trans infection, bound virions remain infectious over days and it is proposed that they are not degraded, but protected in non-lysosomal acidic organelles within the DCs close to the cell membrane thus contributing to the viral infectious potential during DCs' migration from the periphery to the lymphoid tissues. On arrival at lymphoid tissues, intact virions recycle back to DCs' cell surface allowing virus transmission to CD4+ T-cells. In terms of biological role, acts as a class I viral fusion protein. Under the current model, the protein has at least 3 conformational states: pre-fusion native state, pre-hairpin intermediate state, and post-fusion hairpin state. During fusion of viral and target intracellular membranes, the coiled coil regions (heptad repeats) assume a trimer-of-hairpins structure, positioning the fusion peptide in close proximity to the C-terminal region of the ectodomain. The formation of this structure appears to drive apposition and subsequent fusion of viral and target cell membranes. Complete fusion occurs in host cell endosomes and is dynamin-dependent, however some lipid transfer might occur at the plasma membrane. The virus undergoes clathrin-dependent internalization long before endosomal fusion, thus minimizing the surface exposure of conserved viral epitopes during fusion and reducing the efficacy of inhibitors targeting these epitopes. Membranes fusion leads to delivery of the nucleocapsid into the cytoplasm. The chain is Envelope glycoprotein gp160 from Homo sapiens (Human).